The primary structure comprises 329 residues: NADH-quinone oxidoreductase subunit H (329 aa).

The next 9 membrane-spanning stretches (helical) occupy residues 9-29, 42-62, 75-95, 117-137, 154-174, 188-208, 238-258, 269-291, and 309-329; these read LIKI…ATYI, GPCY…IKLF, FIFT…MAPI, IGFL…ILAG, IQLL…LMVV, GGFL…FLIA, LKWG…SFVI, WGFI…LSMW, and WKIM…IILI.

It belongs to the complex I subunit 1 family. In terms of assembly, NDH-1 is composed of 14 different subunits. Subunits NuoA, H, J, K, L, M, N constitute the membrane sector of the complex.

The protein resides in the cell inner membrane. It carries out the reaction a quinone + NADH + 5 H(+)(in) = a quinol + NAD(+) + 4 H(+)(out). In terms of biological role, NDH-1 shuttles electrons from NADH, via FMN and iron-sulfur (Fe-S) centers, to quinones in the respiratory chain. The immediate electron acceptor for the enzyme in this species is believed to be ubiquinone. Couples the redox reaction to proton translocation (for every two electrons transferred, four hydrogen ions are translocated across the cytoplasmic membrane), and thus conserves the redox energy in a proton gradient. This subunit may bind ubiquinone. The protein is NADH-quinone oxidoreductase subunit H of Helicobacter pylori (strain P12).